A 573-amino-acid chain; its full sequence is Phosphoenolpyruvate-protein phosphotransferase (573 aa).

Residue His190 is the Tele-phosphohistidine intermediate of the active site. Positions 297 and 332 each coordinate phosphoenolpyruvate. 2 residues coordinate Mg(2+): Glu431 and Asp455. Phosphoenolpyruvate contacts are provided by residues 454–455 (ND) and Arg465. The active-site Proton donor is the Cys502.

Belongs to the PEP-utilizing enzyme family. As to quaternary structure, homodimer. The cofactor is Mg(2+).

The protein resides in the cytoplasm. It carries out the reaction L-histidyl-[protein] + phosphoenolpyruvate = N(pros)-phospho-L-histidyl-[protein] + pyruvate. Irreversibly inhibited the sulfhydryl reagent N-ethylmaleimide (NEM). Its function is as follows. General (non sugar-specific) component of the phosphoenolpyruvate-dependent sugar phosphotransferase system (sugar PTS). This major carbohydrate active-transport system catalyzes the phosphorylation of incoming sugar substrates concomitantly with their translocation across the cell membrane. Enzyme I transfers the phosphoryl group from phosphoenolpyruvate (PEP) to the phosphoryl carrier protein (HPr). The sequence is that of Phosphoenolpyruvate-protein phosphotransferase (ptsI) from Mycoplasma capricolum subsp. capricolum (strain California kid / ATCC 27343 / NCTC 10154).